A 765-amino-acid chain; its full sequence is Protein transport protein Sec23A (765 aa).

4 residues coordinate Zn(2+): C61, C66, C85, and C88. A Gelsolin-like repeat occupies 632–718 (PEPVLLDSSS…EHGGSQARFL (87 aa)).

Belongs to the SEC23/SEC24 family. SEC23 subfamily. As to quaternary structure, COPII is composed of at least five proteins: the Sec23/24 complex, the Sec13/31 complex and Sar1.

It is found in the cytoplasmic vesicle. The protein resides in the COPII-coated vesicle membrane. Its subcellular location is the endoplasmic reticulum membrane. It localises to the cytoplasm. The protein localises to the cytosol. Its function is as follows. Component of the coat protein complex II (COPII) which promotes the formation of transport vesicles from the endoplasmic reticulum (ER). The coat has two main functions, the physical deformation of the endoplasmic reticulum membrane into vesicles and the selection of cargo molecules for their transport to the Golgi complex. The chain is Protein transport protein Sec23A from Danio rerio (Zebrafish).